The sequence spans 198 residues: Penicillin-binding protein activator LpoB (198 aa).

Positions 1–20 are cleaved as a signal peptide; it reads MSWIRIRRSGVLLLALVLSG. The N-palmitoyl cysteine moiety is linked to residue Cys21. The S-diacylglycerol cysteine moiety is linked to residue Cys21. Residues 28–62 form a disordered region; the sequence is PQPAAPVEPVTPPVNVPQPPKAEPGQNVPPPPKMQ. The span at 30–61 shows a compositional bias: pro residues; the sequence is PAAPVEPVTPPVNVPQPPKAEPGQNVPPPPKM.

Belongs to the LpoB family. As to quaternary structure, interacts with PBP1b.

The protein localises to the cell outer membrane. In terms of biological role, regulator of peptidoglycan synthesis that is essential for the function of penicillin-binding protein 1B (PBP1b). This Erwinia amylovora (strain CFBP1430) protein is Penicillin-binding protein activator LpoB.